The primary structure comprises 224 residues: MSITQWPTSERPREKLLREDAHILSDAELIAVIIQKGVRGCNAVELAREWLNHLGGLASLLNADFHRLSGLRGLGKAVYCKLKAAAELQRRYLRQSLERKGQLGCTQDAQQLLYAQLRHHESEVFACLFLDNRHRIIQFEKLFYGSINQASVHPREIIKRALYHNSAALIVAHNHPSGVPDPSQADRAATTHLKEALALIDVRLLDHIIIGDRNSFSFAESGLL.

Residues 102–224 (QLGCTQDAQQ…SFSFAESGLL (123 aa)) enclose the MPN domain. Zn(2+) is bound by residues His173, His175, and Asp186. Residues 173–186 (HNHPSGVPDPSQAD) carry the JAMM motif motif.

The protein belongs to the UPF0758 family.

This is UPF0758 protein CBUD_1789 from Coxiella burnetii (strain Dugway 5J108-111).